The primary structure comprises 399 residues: S-adenosylmethionine synthase (399 aa).

His15 is an ATP binding site. Position 17 (Asp17) interacts with Mg(2+). Glu43 contacts K(+). 2 residues coordinate L-methionine: Glu56 and Gln99. A flexible loop region spans residues 99–109; that stretch reads QSPDIADGVDH. ATP contacts are provided by residues 175–177, 242–243, Asp251, 257–258, Ala274, and Lys278; these read DAK, RF, and RK. Asp251 contacts L-methionine. Lys282 provides a ligand contact to L-methionine.

The protein belongs to the AdoMet synthase family. In terms of assembly, homotetramer; dimer of dimers. Mg(2+) serves as cofactor. Requires K(+) as cofactor.

It is found in the cytoplasm. It catalyses the reaction L-methionine + ATP + H2O = S-adenosyl-L-methionine + phosphate + diphosphate. Its pathway is amino-acid biosynthesis; S-adenosyl-L-methionine biosynthesis; S-adenosyl-L-methionine from L-methionine: step 1/1. In terms of biological role, catalyzes the formation of S-adenosylmethionine (AdoMet) from methionine and ATP. The overall synthetic reaction is composed of two sequential steps, AdoMet formation and the subsequent tripolyphosphate hydrolysis which occurs prior to release of AdoMet from the enzyme. The sequence is that of S-adenosylmethionine synthase from Lactobacillus acidophilus (strain ATCC 700396 / NCK56 / N2 / NCFM).